We begin with the raw amino-acid sequence, 196 residues long: Carnitine operon protein CaiE (196 aa).

The segment at 174–196 (QPLRQMEENRPRLQGTTDVTPKR) is disordered. Over residues 187–196 (QGTTDVTPKR) the composition is skewed to polar residues.

The protein belongs to the transferase hexapeptide repeat family.

Its pathway is amine and polyamine metabolism; carnitine metabolism. In terms of biological role, overproduction of CaiE stimulates the activity of CaiB and CaiD. In Escherichia coli (strain K12), this protein is Carnitine operon protein CaiE (caiE).